Consider the following 118-residue polypeptide: Non-specific lipid-transfer protein 2 (118 aa).

The signal sequence occupies residues 1-25 (MAGVMKLACMVLACMIVAGPITANA). 4 disulfides stabilise this stretch: Cys29–Cys76, Cys39–Cys53, Cys54–Cys100, and Cys74–Cys114.

This sequence belongs to the plant LTP family.

Its function is as follows. Plant non-specific lipid-transfer proteins transfer phospholipids as well as galactolipids across membranes. May play a role in wax or cutin deposition in the cell walls of expanding epidermal cells and certain secretory tissues. This Arabidopsis thaliana (Mouse-ear cress) protein is Non-specific lipid-transfer protein 2 (LTP2).